Consider the following 637-residue polypeptide: Probable potassium transport system protein Kup (637 aa).

12 helical membrane-spanning segments follow: residues 24 to 44 (LAIAAIGVVFGDIGTSPLYAL), 64 to 84 (VISLLFWAIILVVGIKYLLFV), 113 to 133 (AGALMALGIFGACMFYGDAVI), 151 to 171 (PHLSHLVLPITIVILIALFWI), 182 to 202 (LFGPIMVVWFIVIAALGVYHI), 225 to 245 (LLQAYVVLGSVVLVLTGAEAL), 261 to 281 (AYGLVMPSLVLNYFGQGALLI), 290 to 310 (PFFLLAPEWGLLPLVVLSTVA), 351 to 371 (IYVPVVNWLLLFVILCIVIGF), 381 to 401 (YGIAVTATMVITTVLACVVMV), 409 to 429 (LLVGAIIAVFLAIDLGFFGAN), and 433 to 453 (VAQGGWLPLGIGALLFFLLMT).

Belongs to the HAK/KUP transporter (TC 2.A.72) family.

Its subcellular location is the cell inner membrane. The catalysed reaction is K(+)(in) + H(+)(in) = K(+)(out) + H(+)(out). In terms of biological role, transport of potassium into the cell. Likely operates as a K(+):H(+) symporter. The protein is Probable potassium transport system protein Kup of Burkholderia ambifaria (strain ATCC BAA-244 / DSM 16087 / CCUG 44356 / LMG 19182 / AMMD) (Burkholderia cepacia (strain AMMD)).